Consider the following 363-residue polypeptide: S-adenosylmethionine:tRNA ribosyltransferase-isomerase (363 aa).

The protein belongs to the QueA family. As to quaternary structure, monomer.

It localises to the cytoplasm. It catalyses the reaction 7-aminomethyl-7-carbaguanosine(34) in tRNA + S-adenosyl-L-methionine = epoxyqueuosine(34) in tRNA + adenine + L-methionine + 2 H(+). It participates in tRNA modification; tRNA-queuosine biosynthesis. Its function is as follows. Transfers and isomerizes the ribose moiety from AdoMet to the 7-aminomethyl group of 7-deazaguanine (preQ1-tRNA) to give epoxyqueuosine (oQ-tRNA). The polypeptide is S-adenosylmethionine:tRNA ribosyltransferase-isomerase (Haemophilus influenzae (strain PittEE)).